The chain runs to 102 residues: MSDQATTLKIKPLGDRILVKREEEASTARGGIILPDTAKKKQDRAEVLALGTGKKDDKGQQLPFEVQVGNIVLIDKYSGQELTVEGEEYVIVQMSEVIAVLQ.

Belongs to the GroES chaperonin family. As to quaternary structure, heptamer of 7 subunits arranged in a ring. Interacts with the chaperonin GroEL.

The protein resides in the cytoplasm. Functionally, together with the chaperonin GroEL, plays an essential role in assisting protein folding. The GroEL-GroES system forms a nano-cage that allows encapsulation of the non-native substrate proteins and provides a physical environment optimized to promote and accelerate protein folding. GroES binds to the apical surface of the GroEL ring, thereby capping the opening of the GroEL channel. This Chlamydia trachomatis serovar D (strain ATCC VR-885 / DSM 19411 / UW-3/Cx) protein is Co-chaperonin GroES.